Consider the following 299-residue polypeptide: MDANSAHDTARILIEALPYIQRFAGTTVVIKYGGNAMENEELKNSFARDVVMMKQVGIHPVIVHGGGPQIGELLERLGKESKFVQGMRVTDRETMDVVQMVLGGLVNKDIVNLIQHNGGQAIGLTGKDGRLIKARKMVLKASDADSPALQASEIIDIGHVGEVQGIDTRIIDLLAGSDFIPVIAPIGVDDNGASYNINADLVAGKVAEVLRAEKLILLTNVPGLKDKQGQILTGLTTERVNSLIKDGTIYGGMLPKIGCALEAVQNGVHTAHIIDGRVSHAVLLEILTDKGIGTLISKD.

Residues 66–67 (GG), Arg88, and Asn196 each bind substrate.

The protein belongs to the acetylglutamate kinase family. ArgB subfamily.

The protein localises to the cytoplasm. The catalysed reaction is N-acetyl-L-glutamate + ATP = N-acetyl-L-glutamyl 5-phosphate + ADP. It functions in the pathway amino-acid biosynthesis; L-arginine biosynthesis; N(2)-acetyl-L-ornithine from L-glutamate: step 2/4. Functionally, catalyzes the ATP-dependent phosphorylation of N-acetyl-L-glutamate. The polypeptide is Acetylglutamate kinase (Alcanivorax borkumensis (strain ATCC 700651 / DSM 11573 / NCIMB 13689 / SK2)).